We begin with the raw amino-acid sequence, 272 residues long: tRNA pseudouridine synthase B (272 aa).

Catalysis depends on Asp-38, which acts as the Nucleophile.

The protein belongs to the pseudouridine synthase TruB family. Type 1 subfamily.

It carries out the reaction uridine(55) in tRNA = pseudouridine(55) in tRNA. In terms of biological role, responsible for synthesis of pseudouridine from uracil-55 in the psi GC loop of transfer RNAs. In Campylobacter jejuni subsp. jejuni serotype O:6 (strain 81116 / NCTC 11828), this protein is tRNA pseudouridine synthase B.